The following is a 287-amino-acid chain: Syntaxin-11 (287 aa).

Residues 41–71 (LESLYRDIRDIQDENQLLVADVKRLGKQNAR) are a coiled coil. In terms of domain architecture, t-SNARE coiled-coil homology spans 204-266 (LNEIESRHRE…GQAKAQVRKA (63 aa)).

This sequence belongs to the syntaxin family. In terms of assembly, interacts with the SNARE proteins SNAP-23 and VAMP.

It is found in the membrane. It localises to the golgi apparatus. The protein localises to the trans-Golgi network membrane. SNARE that acts to regulate protein transport between late endosomes and the trans-Golgi network. This Homo sapiens (Human) protein is Syntaxin-11 (STX11).